Here is a 170-residue protein sequence, read N- to C-terminus: E1B protein, small T-antigen (170 aa).

This sequence belongs to the adenoviridae E1B 19 kDa protein family.

This is E1B protein, small T-antigen from Canine adenovirus serotype 2 (CAdV-2).